Consider the following 329-residue polypeptide: Solute carrier family 35 member B1 (329 aa).

The next 8 membrane-spanning stretches (helical) occupy residues 21–41 (AVCFCGVFVCYFYYGILQETI), 60–80 (TLVFIQCIINAAFARLLIQFF), 91–111 (WLYGLCSLSYLGAMVSSNSAL), 142–162 (YPMAKYLCVFLIVGGVALFLY), 175–195 (VFGFGEMLLLLSLTLDGLTGV), 220–240 (TLVLGIAVLWSGEVWEFLAFT), 250–270 (ILLFGITSALGQTFIFMTVVY), and 292–312 (VLLFGNVISHMQWFGTILVFL). The short motif at 325 to 329 (KKTTH) is the Di-lysine motif element.

The protein belongs to the nucleotide-sugar transporter family. SLC35B subfamily.

The protein resides in the endoplasmic reticulum membrane. Functionally, probable sugar transporter. In Danio rerio (Zebrafish), this protein is Solute carrier family 35 member B1 (slc35b1).